The following is a 312-amino-acid chain: MEQHNLTTVNEFILTGITDIAELQAPLFALFLMIYVISVMGNLGMIVLTKLDSRLQTPMYFFLRHLAFMDLGYSTTVGPKMLVNFVVDKNIISYYFCATQLAFFLVFIGSELFILSAMSYDLYVAICNPLLYTVIMSRRVCQVLVAIPYLYCTFISLLVTIKIFTLSFCGYNVISHFYCDSLPLLPLLCSNTHEIELIILIFAAIDLISSLLIVLLSYLLILVAILRMNSAGRQKAFSTCGAHLTVVIVFYGTLLFMYVQPKSSHSFDTDKVASIFYTLVIPMLNPLIYSLRNKDVKYALRRTWNNLCNIFV.

The Extracellular segment spans residues 1–25 (MEQHNLTTVNEFILTGITDIAELQA). The N-linked (GlcNAc...) asparagine glycan is linked to Asn-5. The chain crosses the membrane as a helical span at residues 26–46 (PLFALFLMIYVISVMGNLGMI). Residues 47–54 (VLTKLDSR) are Cytoplasmic-facing. Residues 55–75 (LQTPMYFFLRHLAFMDLGYST) traverse the membrane as a helical segment. At 76–99 (TVGPKMLVNFVVDKNIISYYFCAT) the chain is on the extracellular side. Cys-97 and Cys-189 are oxidised to a cystine. A helical transmembrane segment spans residues 100–120 (QLAFFLVFIGSELFILSAMSY). Over 121–139 (DLYVAICNPLLYTVIMSRR) the chain is Cytoplasmic. The helical transmembrane segment at 140–160 (VCQVLVAIPYLYCTFISLLVT) threads the bilayer. Residues 161–197 (IKIFTLSFCGYNVISHFYCDSLPLLPLLCSNTHEIEL) lie on the Extracellular side of the membrane. A helical membrane pass occupies residues 198 to 217 (IILIFAAIDLISSLLIVLLS). Topologically, residues 218-236 (YLLILVAILRMNSAGRQKA) are cytoplasmic. Residues 237–257 (FSTCGAHLTVVIVFYGTLLFM) form a helical membrane-spanning segment. Residues 258-270 (YVQPKSSHSFDTD) are Extracellular-facing. The helical transmembrane segment at 271–291 (KVASIFYTLVIPMLNPLIYSL) threads the bilayer. The Cytoplasmic segment spans residues 292 to 312 (RNKDVKYALRRTWNNLCNIFV).

This sequence belongs to the G-protein coupled receptor 1 family.

The protein resides in the cell membrane. Functionally, odorant receptor. The chain is Olfactory receptor 8K3 (OR8K3) from Homo sapiens (Human).